Here is a 968-residue protein sequence, read N- to C-terminus: MDSTLTASEIRQRFIDFFKRNEHTYVHSSATIPLDDPTLLFANAGMNQFKPIFLNTIDPSHPMAKLSRAANTQKCIRAGGKHNDLDDVGKDVYHHTFFEMLGSWSFGDYFKELACKMALELLTQEFGIPIERLYVTYFGGDEAAGLEADLECKQIWQNLGLDDTKILPGNMKDNFWEMGDTGPCGPCSEIHYDRIGGRDAAHLVNQDDPNVLEIWNLVFIQYNREADGILKPLPKKSIDTGMGLERLVSVLQNKMSNYDTDLFVPYFEAIQKGTGARPYTGKVGAEDADGIDMAYRVLADHARTITVALADGGRPDNTGRGYVLRRILRRAVRYAHEKLNASRGFFATLVDVVVQSLGDAFPELKKDPDMVKDIINEEEVQFLKTLSRGRRILDRKIQSLGDSKTIPGDTAWLLYDTYGFPVDLTGLIAEEKGLVVDMDGFEEERKLAQLKSQGKGAGGEDLIMLDIYAIEELRARGLEVTDDSPKYNYHLDSSGSYVFENTVATVMALRREKMFVEEVSTGQECGVVLDKTCFYAEQGGQIYDEGYLVKVDDSSEDKTEFTVKNAQVRGGYVLHIGTIYGDLKVGDQVWLFIDEPRRRPIMSNHTATHILNFALRSVLGEADQKGSLVAPDRLRFDFTAKGAMSTQQIKKAEEIANEMIEAAKAVYTQDCPLAAAKAIQGLRAVFDETYPDPVRVVSIGVPVSELLDDPSGPAGSLTSVEFCGGTHLRNSSHAGAFVIVTEEAIAKGIRRIVAVTGAEAQKALRKAESLKKCLSVMEAKVKAQTAPNKDVQREIADLGEALATAVIPQWQKDELRETLKSLKKVMDDLDRASKADVQKRVLEKTKQFIDSNPNQPLVILEMESGASAKALNEALKLFKMHSPQTSAMLFTVDNEAGKITCLCQVPQNAANRGLKASEWVQQVSGLMDGKGGGKDVSAQATGKNVGCLQEALQLATSFAQLRLGDVKN.

N-acetylmethionine is present on M1. Phosphoserine is present on residues S3 and S8. K19 carries the post-translational modification N6-acetyllysine. ATP contacts are provided by residues R77, H95, W176, and 214–216; that span reads IWN. Positions 216 and 239 each coordinate L-alanine. G243 contacts ATP. 2 positions are modified to phosphoserine: S399 and S555. H605, H609, C723, and H727 together coordinate Zn(2+). The Nuclear localization signal signature appears at 750-763; that stretch reads RRIVAVTGAEAQKA. An N6-acetyllysine modification is found at K876. Position 943 is an N6,N6,N6-trimethyllysine; alternate (K943). An N6,N6-dimethyllysine; alternate modification is found at K943. K943 bears the N6-methyllysine; alternate mark.

Belongs to the class-II aminoacyl-tRNA synthetase family. Monomer. Interacts with ANKRD16; the interaction is direct. The cofactor is Zn(2+). ISGylated. In terms of processing, methylation at 'Lys-943' by METTL21C.

The protein localises to the cytoplasm. It localises to the nucleus. The catalysed reaction is tRNA(Ala) + L-alanine + ATP = L-alanyl-tRNA(Ala) + AMP + diphosphate. It carries out the reaction (S)-lactate + ATP + H(+) = (S)-lactoyl-AMP + diphosphate. The enzyme catalyses (S)-lactoyl-AMP + L-lysyl-[protein] = N(6)-[(S)-lactoyl]-L-lysyl-[protein] + AMP + 2 H(+). Its activity is regulated as follows. The protein lactyltransferase activity is inhibited by beta-alanine. Its function is as follows. Catalyzes the attachment of alanine to tRNA(Ala) in a two-step reaction: alanine is first activated by ATP to form Ala-AMP and then transferred to the acceptor end of tRNA(Ala). Also edits incorrectly charged tRNA(Ala) via its editing domain. In presence of high levels of lactate, also acts as a protein lactyltransferase that mediates lactylation of lysine residues in target proteins, such as TEAD1, TP53/p53 and YAP1. Protein lactylation takes place in a two-step reaction: lactate is first activated by ATP to form lactate-AMP and then transferred to lysine residues of target proteins. Acts as an inhibitor of TP53/p53 activity by catalyzing lactylation of TP53/p53. Acts as a positive regulator of the Hippo pathway by mediating lactylation of TEAD1 and YAP1. The polypeptide is Alanine--tRNA ligase, cytoplasmic (Homo sapiens (Human)).